We begin with the raw amino-acid sequence, 601 residues long: DNA ligase (601 aa).

Asp-258 contributes to the ATP binding site. Lys-260 functions as the N6-AMP-lysine intermediate in the catalytic mechanism. Arg-265, Arg-280, Glu-310, Phe-350, Arg-427, and Lys-433 together coordinate ATP.

The protein belongs to the ATP-dependent DNA ligase family. Mg(2+) is required as a cofactor. Requires Ca(2+) as cofactor. The cofactor is Mn(2+).

The enzyme catalyses ATP + (deoxyribonucleotide)n-3'-hydroxyl + 5'-phospho-(deoxyribonucleotide)m = (deoxyribonucleotide)n+m + AMP + diphosphate.. DNA ligase that seals nicks in double-stranded DNA during DNA replication, DNA recombination and DNA repair. Also has low activity with dATP. Inactive with NAD(+), CTP, GTP, UTP, dCTP, dGTP or dTTP. This chain is DNA ligase, found in Saccharolobus shibatae (strain ATCC 51178 / DSM 5389 / JCM 8931 / NBRC 15437 / B12) (Sulfolobus shibatae).